Reading from the N-terminus, the 452-residue chain is tRNA modification GTPase MnmE (452 aa).

3 residues coordinate (6S)-5-formyl-5,6,7,8-tetrahydrofolate: Arg-28, Glu-85, and Lys-124. The TrmE-type G domain occupies 220–378 (GMNVVLVGRP…LRTELLRAAG (159 aa)). Asn-230 lines the K(+) pocket. GTP contacts are provided by residues 230–235 (NVGKSS), 249–255 (TDVAGTT), 274–277 (DTAG), and 359–361 (SAR). Ser-234 provides a ligand contact to Mg(2+). Residues Thr-249, Val-251, and Thr-254 each contribute to the K(+) site. Thr-255 serves as a coordination point for Mg(2+). Lys-452 lines the (6S)-5-formyl-5,6,7,8-tetrahydrofolate pocket.

The protein belongs to the TRAFAC class TrmE-Era-EngA-EngB-Septin-like GTPase superfamily. TrmE GTPase family. As to quaternary structure, homodimer. Heterotetramer of two MnmE and two MnmG subunits. Requires K(+) as cofactor.

It is found in the cytoplasm. In terms of biological role, exhibits a very high intrinsic GTPase hydrolysis rate. Involved in the addition of a carboxymethylaminomethyl (cmnm) group at the wobble position (U34) of certain tRNAs, forming tRNA-cmnm(5)s(2)U34. This chain is tRNA modification GTPase MnmE, found in Azoarcus sp. (strain BH72).